Consider the following 137-residue polypeptide: Large ribosomal subunit protein uL16 (137 aa).

This sequence belongs to the universal ribosomal protein uL16 family. As to quaternary structure, part of the 50S ribosomal subunit.

Binds 23S rRNA and is also seen to make contacts with the A and possibly P site tRNAs. This Rhizobium meliloti (strain 1021) (Ensifer meliloti) protein is Large ribosomal subunit protein uL16.